The following is a 790-amino-acid chain: Cadherin-18 (790 aa).

Residues methionine 1–glycine 24 form the signal peptide. Positions threonine 25–arginine 53 are excised as a propeptide. Asparagine 36 is a glycosylation site (N-linked (GlcNAc...) asparagine). 5 consecutive Cadherin domains span residues glycine 54–phenylalanine 159, threonine 160–phenylalanine 268, proline 269–phenylalanine 383, serine 384–proline 486, and glutamate 487–serine 608. The Extracellular portion of the chain corresponds to glycine 54 to serine 608. Asparagine 255 carries N-linked (GlcNAc...) asparagine glycosylation. N-linked (GlcNAc...) asparagine glycosylation is found at asparagine 455 and asparagine 536. The chain crosses the membrane as a helical span at residues alanine 609–leucine 636. Residues arginine 637–threonine 790 are Cytoplasmic-facing. Phosphoserine is present on serine 786.

The protein localises to the cell membrane. In terms of biological role, cadherins are calcium-dependent cell adhesion proteins. They preferentially interact with themselves in a homophilic manner in connecting cells; cadherins may thus contribute to the sorting of heterogeneous cell types. This chain is Cadherin-18 (CDH18), found in Bos taurus (Bovine).